The chain runs to 60 residues: Sperm protamine P1 (60 aa).

The disordered stretch occupies residues 1–60; sequence MARYRHSRSRSRSRYRRRRRRRSRYRSRRRRXRRRRRSRRGRRRRGYSRRRYSRRRRRRY.

The protein belongs to the protamine P1 family. In terms of tissue distribution, testis.

The protein resides in the nucleus. The protein localises to the chromosome. Its function is as follows. Protamines substitute for histones in the chromatin of sperm during the haploid phase of spermatogenesis. They compact sperm DNA into a highly condensed, stable and inactive complex. The protein is Sperm protamine P1 (PRM1) of Petrogale concinna (Nabarlek).